Reading from the N-terminus, the 131-residue chain is D-ribose pyranase (131 aa).

Residue His-20 is the Proton donor of the active site. Substrate-binding positions include Asp-28, His-98, and 120-122 (YAN).

It belongs to the RbsD / FucU family. RbsD subfamily. In terms of assembly, homodecamer.

It localises to the cytoplasm. The enzyme catalyses beta-D-ribopyranose = beta-D-ribofuranose. It participates in carbohydrate metabolism; D-ribose degradation; D-ribose 5-phosphate from beta-D-ribopyranose: step 1/2. Functionally, catalyzes the interconversion of beta-pyran and beta-furan forms of D-ribose. This chain is D-ribose pyranase, found in Bacillus thuringiensis (strain Al Hakam).